Reading from the N-terminus, the 89-residue chain is Small ribosomal subunit protein uS15 (89 aa).

This sequence belongs to the universal ribosomal protein uS15 family. As to quaternary structure, part of the 30S ribosomal subunit. Forms a bridge to the 50S subunit in the 70S ribosome, contacting the 23S rRNA.

In terms of biological role, one of the primary rRNA binding proteins, it binds directly to 16S rRNA where it helps nucleate assembly of the platform of the 30S subunit by binding and bridging several RNA helices of the 16S rRNA. Forms an intersubunit bridge (bridge B4) with the 23S rRNA of the 50S subunit in the ribosome. This Pseudomonas entomophila (strain L48) protein is Small ribosomal subunit protein uS15.